The chain runs to 197 residues: Ycf20-like protein (197 aa).

The next 3 membrane-spanning stretches (helical) occupy residues 113-133 (MKIF…TILG), 138-158 (WDVL…MLMY), and 173-193 (FVVF…VDAF).

It belongs to the ycf20 family.

The protein resides in the membrane. This Arabidopsis thaliana (Mouse-ear cress) protein is Ycf20-like protein.